The chain runs to 144 residues: uncharacterized protein (144 aa).

The N-terminal stretch at 1–23 is a signal peptide; that stretch reads MVIPLRNKYGILFLIAVCIMVSG. Residues 119-144 are disordered; it reads QNGQRKTMTRIESKTGREEKDEKSKS. Basic and acidic residues predominate over residues 127–144; sequence TRIESKTGREEKDEKSKS.

This is an uncharacterized protein from Bacillus subtilis (strain 168).